Consider the following 886-residue polypeptide: Protein translocase subunit SecA (886 aa).

Residues Q81, G99 to T103, and D489 each bind ATP.

This sequence belongs to the SecA family.

It is found in the plastid. It localises to the chloroplast stroma. The protein localises to the chloroplast thylakoid membrane. It catalyses the reaction ATP + H2O + cellular proteinSide 1 = ADP + phosphate + cellular proteinSide 2.. Its function is as follows. Has a central role in coupling the hydrolysis of ATP to the transfer of proteins across the thylakoid membrane. This is Protein translocase subunit SecA from Phaeodactylum tricornutum (strain CCAP 1055/1).